The sequence spans 132 residues: Global transcriptional regulator Spx (132 aa).

An intrachain disulfide couples Cys-10 to Cys-13.

Belongs to the ArsC family. Spx subfamily. Interacts with the C-terminal domain of the alpha subunit of the RNAP.

The protein resides in the cytoplasm. In terms of biological role, global transcriptional regulator that plays a key role in stress response and exerts either positive or negative regulation of genes. Acts by interacting with the C-terminal domain of the alpha subunit of the RNA polymerase (RNAP). This interaction can enhance binding of RNAP to the promoter region of target genes and stimulate their transcription, or block interaction of RNAP with activator. The protein is Global transcriptional regulator Spx of Enterococcus faecalis (strain ATCC 700802 / V583).